A 131-amino-acid polypeptide reads, in one-letter code: Holo-[acyl-carrier-protein] synthase (131 aa).

Mg(2+)-binding residues include Asp-8 and Glu-59.

Belongs to the P-Pant transferase superfamily. AcpS family. Mg(2+) serves as cofactor.

The protein localises to the cytoplasm. It carries out the reaction apo-[ACP] + CoA = holo-[ACP] + adenosine 3',5'-bisphosphate + H(+). Functionally, transfers the 4'-phosphopantetheine moiety from coenzyme A to a Ser of acyl-carrier-protein. In Rickettsia conorii (strain ATCC VR-613 / Malish 7), this protein is Holo-[acyl-carrier-protein] synthase.